Here is a 535-residue protein sequence, read N- to C-terminus: Serum response factor-binding protein 1 (535 aa).

2 coiled-coil regions span residues 5–27 (LNLN…LIIR) and 107–177 (LKQK…EKCK). Composition is skewed to basic and acidic residues over residues 128 to 151 (AAEG…ETKK), 159 to 191 (KNTE…EKAL), 205 to 325 (AENK…ERPV), 361 to 376 (DKEK…ERFY), 406 to 432 (SDKD…EVQK), and 460 to 472 (TKRE…ERNK). Disordered regions lie at residues 128–435 (AAEG…KEIP) and 453–535 (TKPK…VFDD).

The protein resides in the cytoplasm. The protein localises to the perinuclear region. May be involved in regulating transcriptional activation of cardiac genes during the aging process. May play a role in biosynthesis and/or processing of SLC2A4 in adipose cells. The sequence is that of Serum response factor-binding protein 1 from Xenopus tropicalis (Western clawed frog).